The primary structure comprises 259 residues: 14-3-3-like protein (259 aa).

This sequence belongs to the 14-3-3 family.

The polypeptide is 14-3-3-like protein (Helianthus annuus (Common sunflower)).